The primary structure comprises 385 residues: Uroporphyrinogen decarboxylase (385 aa).

Substrate is bound by residues 53–57 (RQAGR), D102, Y179, S234, and H363.

This sequence belongs to the uroporphyrinogen decarboxylase family. In terms of assembly, homodimer.

It is found in the cytoplasm. The catalysed reaction is uroporphyrinogen III + 4 H(+) = coproporphyrinogen III + 4 CO2. It functions in the pathway porphyrin-containing compound metabolism; protoporphyrin-IX biosynthesis; coproporphyrinogen-III from 5-aminolevulinate: step 4/4. Functionally, catalyzes the decarboxylation of four acetate groups of uroporphyrinogen-III to yield coproporphyrinogen-III. This is Uroporphyrinogen decarboxylase from Tropheryma whipplei (strain TW08/27) (Whipple's bacillus).